Here is a 265-residue protein sequence, read N- to C-terminus: Phosphonates import ATP-binding protein PhnC (265 aa).

The ABC transporter domain occupies Leu18 to Glu262. Position 51 to 58 (Gly51 to Ser58) interacts with ATP.

The protein belongs to the ABC transporter superfamily. Phosphonates importer (TC 3.A.1.9.1) family. As to quaternary structure, the complex is composed of two ATP-binding proteins (PhnC), two transmembrane proteins (PhnE) and a solute-binding protein (PhnD).

It is found in the cell inner membrane. The catalysed reaction is phosphonate(out) + ATP + H2O = phosphonate(in) + ADP + phosphate + H(+). In terms of biological role, part of the ABC transporter complex PhnCDE involved in phosphonates import. Responsible for energy coupling to the transport system. This chain is Phosphonates import ATP-binding protein PhnC, found in Nitratidesulfovibrio vulgaris (strain ATCC 29579 / DSM 644 / CCUG 34227 / NCIMB 8303 / VKM B-1760 / Hildenborough) (Desulfovibrio vulgaris).